We begin with the raw amino-acid sequence, 246 residues long: DNA repair protein RecO (246 aa).

It belongs to the RecO family.

Its function is as follows. Involved in DNA repair and RecF pathway recombination. This chain is DNA repair protein RecO, found in Pelobacter propionicus (strain DSM 2379 / NBRC 103807 / OttBd1).